Reading from the N-terminus, the 504-residue chain is L-carnitine/gamma-butyrobetaine antiporter (504 aa).

Transmembrane regions (helical) follow at residues 10–30 (IEPK…WLTV), 51–71 (WGWA…WLVF), 92–112 (IFMM…SIEI), 143–163 (GPLP…FFFV), 195–215 (FYLV…TPLV), 231–251 (LDAI…ACGL), 263–283 (SYLS…SFIM), 316–336 (WTVF…IFLA), 347–367 (LCFG…TVLG), 398–418 (WAAL…CFIA), 446–466 (LLVR…LLAL), and 475–495 (AIIA…LSFI).

This sequence belongs to the BCCT transporter (TC 2.A.15) family. CaiT subfamily. Homotrimer.

It localises to the cell inner membrane. The enzyme catalyses 4-(trimethylamino)butanoate(in) + (R)-carnitine(out) = 4-(trimethylamino)butanoate(out) + (R)-carnitine(in). It participates in amine and polyamine metabolism; carnitine metabolism. Catalyzes the exchange of L-carnitine for gamma-butyrobetaine. In Shigella flexneri serotype 5b (strain 8401), this protein is L-carnitine/gamma-butyrobetaine antiporter.